The chain runs to 338 residues: Lipoate-protein ligase A (338 aa).

One can recognise a BPL/LPL catalytic domain in the interval 29–216 (PATQRVLFLW…AFFAHYGERV (188 aa)). Residues R71, 76-79 (GAVF), and K134 contribute to the ATP site. K134 provides a ligand contact to (R)-lipoate.

It belongs to the LplA family. As to quaternary structure, monomer.

The protein resides in the cytoplasm. It catalyses the reaction L-lysyl-[lipoyl-carrier protein] + (R)-lipoate + ATP = N(6)-[(R)-lipoyl]-L-lysyl-[lipoyl-carrier protein] + AMP + diphosphate + H(+). It functions in the pathway protein modification; protein lipoylation via exogenous pathway; protein N(6)-(lipoyl)lysine from lipoate: step 1/2. It participates in protein modification; protein lipoylation via exogenous pathway; protein N(6)-(lipoyl)lysine from lipoate: step 2/2. Catalyzes both the ATP-dependent activation of exogenously supplied lipoate to lipoyl-AMP and the transfer of the activated lipoyl onto the lipoyl domains of lipoate-dependent enzymes. The sequence is that of Lipoate-protein ligase A from Escherichia coli O8 (strain IAI1).